We begin with the raw amino-acid sequence, 465 residues long: Lysosomal dipeptide transporter MFSD1 (465 aa).

The segment at 1-23 (MEEEDEEARALLAGGPDEADRGA) is disordered. The short motif at 11 to 12 (LL) is the Dileucine internalization motif element. 12 helical membrane-spanning segments follow: residues 39 to 59 (LVHR…SYFC), 83 to 103 (LLYA…GFLI), 113 to 133 (TIIF…GGIF), 135 to 155 (AFWL…SLAV), 170 to 191 (LNLV…NMNL), 213 to 233 (ITLM…LALA), 266 to 286 (LWLI…FIGL), 304 to 324 (AINS…GLLV), 331 to 351 (IIWV…LAFT), 361 to 381 (LLGL…AFVV), 392 to 412 (FMQS…GMIL), and 418 to 438 (LFLE…VVLL).

Belongs to the major facilitator superfamily. Homodimer. Interacts with lysosomal protein GLMP (via lumenal domain); the interaction starts while both proteins are still in the endoplasmic reticulum and is required for stabilization of MFSD1 in lysosomes but has no direct effect on its targeting to lysosomes or transporter activity.

The protein localises to the lysosome membrane. The enzyme catalyses L-alpha-aminoacyl-L-arginine(out) = L-alpha-aminoacyl-L-arginine(in). It catalyses the reaction L-arginyl-L-alpha-amino acid(out) = L-arginyl-L-alpha-amino acid(in). The catalysed reaction is L-arginyl-glycine(out) = L-arginyl-glycine(in). It carries out the reaction L-alpha-aminoacyl-L-lysine(out) = L-alpha-aminoacyl-L-lysine(in). The enzyme catalyses L-aspartyl-L-lysine(out) = L-aspartyl-L-lysine(in). It catalyses the reaction L-alanyl-L-lysine(out) = L-alanyl-L-lysine(in). The catalysed reaction is L-lysyl-L-alpha-amino acid(out) = L-lysyl-L-alpha-amino acid(in). It carries out the reaction L-lysyl-L-alanine(out) = L-lysyl-L-alanine(in). The enzyme catalyses L-lysyl-L-lysine(out) = L-lysyl-L-lysine(in). It catalyses the reaction L-lysyl-glycine(out) = L-lysyl-glycine(in). The catalysed reaction is L-alpha-aminoacyl-L-histidine(out) = L-alpha-aminoacyl-L-histidine(in). It carries out the reaction L-histidyl-L-alpha-amino acid(out) = L-histidyl-L-alpha-amino acid(in). The enzyme catalyses L-histidyl-glycine(out) = L-histidyl-glycine(in). Lysosomal dipeptide uniporter that selectively exports lysine, arginine or histidine-containing dipeptides with a net positive charge from the lysosome lumen into the cytosol. Could play a role in a specific type of protein O-glycosylation indirectly regulating macrophages migration and tissue invasion. Also essential for liver homeostasis. This is Lysosomal dipeptide transporter MFSD1 from Pongo abelii (Sumatran orangutan).